A 356-amino-acid polypeptide reads, in one-letter code: Protein disulfide isomerase crld-1 (356 aa).

Positions 1–17 (MSRILLLLAVLIGATSQ) are cleaved as a signal peptide. At 18 to 299 (KEVTIKNEKC…DRPFMPIDQQ (282 aa)) the chain is on the lumenal side. Residues 27-30 (CRTC) carry the CXXC motif. A disulfide bridge connects residues C27 and C30. N-linked (GlcNAc...) asparagine glycosylation occurs at N122. In terms of domain architecture, EGF-like 1 spans 150 to 188 (GLSEKADVCFGKGSCHGDGSREGSGKCKCETGYTGNLCR). 5 cysteine pairs are disulfide-bonded: C158–C176, C178–C187, C245–C258, C251–C267, and C269–C281. An EGF-like 2; calcium-binding domain is found at 241 to 282 (DVNECQNESACTKEHEICVNTVGSFKCECKEGYKKDDEQNCQ). N247 is a glycosylation site (N-linked (GlcNAc...) asparagine). The chain crosses the membrane as a helical span at residues 300–317 (LKLIAFSSLIIIITFVVW). Topologically, residues 318-321 (HGSP) are cytoplasmic. The helical transmembrane segment at 322 to 341 (VLYVLTGITIVALILVDLYV) threads the bilayer. The Lumenal portion of the chain corresponds to 342–356 (NPDTIPDEAKRFLGY).

Belongs to the CRELD family. Interacts with unc-29. As to expression, isoforms a: Widely expressed in tissues including body wall muscles, neurons, pharynx, hypodermis, seam cells, intestine and gonad. Isoform b: Widely expressed in tissues including body wall muscles, neurons, pharynx, hypodermis, seam cells, intestine and gonad.

The protein resides in the endoplasmic reticulum membrane. The protein localises to the endoplasmic reticulum lumen. The enzyme catalyses Catalyzes the rearrangement of -S-S- bonds in proteins.. In terms of biological role, protein disulfide isomerase which associates with the unc-29 subunit of levamisole-sensitive nicotinic acetylcholine receptors (L-nAChR) to promote L-nAChR assembly in the endoplasmic reticulum at neuromuscular junctions. Functionally, promotes L-nAChR assembly in the endoplasmic reticulum at neuromuscular junctions. This is Protein disulfide isomerase crld-1 from Caenorhabditis elegans.